Consider the following 159-residue polypeptide: 2-C-methyl-D-erythritol 2,4-cyclodiphosphate synthase (159 aa).

Positions 10 and 12 each coordinate a divalent metal cation. Residues 10–12 (DVH) and 36–37 (HS) each bind 4-CDP-2-C-methyl-D-erythritol 2-phosphate. Residue His-44 participates in a divalent metal cation binding. 4-CDP-2-C-methyl-D-erythritol 2-phosphate is bound by residues 58-60 (DIG), 63-67 (FPDTD), 102-108 (AQVPKMA), 134-137 (TTTE), Phe-141, and Arg-144.

This sequence belongs to the IspF family. As to quaternary structure, homotrimer. The cofactor is a divalent metal cation.

The catalysed reaction is 4-CDP-2-C-methyl-D-erythritol 2-phosphate = 2-C-methyl-D-erythritol 2,4-cyclic diphosphate + CMP. Its pathway is isoprenoid biosynthesis; isopentenyl diphosphate biosynthesis via DXP pathway; isopentenyl diphosphate from 1-deoxy-D-xylulose 5-phosphate: step 4/6. In terms of biological role, involved in the biosynthesis of isopentenyl diphosphate (IPP) and dimethylallyl diphosphate (DMAPP), two major building blocks of isoprenoid compounds. Catalyzes the conversion of 4-diphosphocytidyl-2-C-methyl-D-erythritol 2-phosphate (CDP-ME2P) to 2-C-methyl-D-erythritol 2,4-cyclodiphosphate (ME-CPP) with a corresponding release of cytidine 5-monophosphate (CMP). The protein is 2-C-methyl-D-erythritol 2,4-cyclodiphosphate synthase of Shewanella woodyi (strain ATCC 51908 / MS32).